The primary structure comprises 431 residues: Enolase (431 aa).

Gln166 serves as a coordination point for (2R)-2-phosphoglycerate. The active-site Proton donor is Glu208. Residues Asp245, Glu288, and Asp315 each contribute to the Mg(2+) site. (2R)-2-phosphoglycerate-binding residues include Lys340, Arg369, Ser370, and Lys391. The active-site Proton acceptor is the Lys340.

The protein belongs to the enolase family. Mg(2+) is required as a cofactor.

The protein resides in the cytoplasm. It is found in the secreted. It localises to the cell surface. It catalyses the reaction (2R)-2-phosphoglycerate = phosphoenolpyruvate + H2O. It participates in carbohydrate degradation; glycolysis; pyruvate from D-glyceraldehyde 3-phosphate: step 4/5. Functionally, catalyzes the reversible conversion of 2-phosphoglycerate (2-PG) into phosphoenolpyruvate (PEP). It is essential for the degradation of carbohydrates via glycolysis. The sequence is that of Enolase from Clostridium botulinum (strain Okra / Type B1).